The primary structure comprises 196 residues: NADH-quinone oxidoreductase subunit I (196 aa).

4Fe-4S ferredoxin-type domains follow at residues 54-84 (LNRWPDGLEKCVGCELCAWACPADAIYVEGA) and 104-133 (RVYQINYLRCILCGLCIEACPTRALTMTNE). The [4Fe-4S] cluster site is built by C64, C67, C70, C74, C113, C116, C119, and C123.

This sequence belongs to the complex I 23 kDa subunit family. As to quaternary structure, NDH-1 is composed of 14 different subunits. Subunits NuoA, H, J, K, L, M, N constitute the membrane sector of the complex. Requires [4Fe-4S] cluster as cofactor.

It is found in the cell membrane. The enzyme catalyses a quinone + NADH + 5 H(+)(in) = a quinol + NAD(+) + 4 H(+)(out). NDH-1 shuttles electrons from NADH, via FMN and iron-sulfur (Fe-S) centers, to quinones in the respiratory chain. The immediate electron acceptor for the enzyme in this species is believed to be ubiquinone. Couples the redox reaction to proton translocation (for every two electrons transferred, four hydrogen ions are translocated across the cytoplasmic membrane), and thus conserves the redox energy in a proton gradient. The chain is NADH-quinone oxidoreductase subunit I from Nocardioides sp. (strain ATCC BAA-499 / JS614).